A 428-amino-acid chain; its full sequence is GTPase Obg (428 aa).

Residues 1-158 form the Obg domain; that stretch reads MFVDQVKIYV…RYIVLELKVL (158 aa). The interval 118–143 is disordered; it reads KGGRGGRGNTRFATPANPAPQLSENG. Residues 159 to 329 form the OBG-type G domain; it reads ADVGLVGFPS…LLFEIADRLE (171 aa). Residues 165–172, 190–194, 212–215, 282–285, and 310–312 contribute to the GTP site; these read GFPSVGKS, FTTLN, DLPG, NKMD, and SAV. Residues Ser172 and Thr192 each contribute to the Mg(2+) site. Residues 350 to 428 enclose the OCT domain; that stretch reads KLEDEEAPFE…LLEFEFEFID (79 aa).

Belongs to the TRAFAC class OBG-HflX-like GTPase superfamily. OBG GTPase family. Monomer. It depends on Mg(2+) as a cofactor.

It is found in the cytoplasm. Its function is as follows. An essential GTPase which binds GTP, GDP and possibly (p)ppGpp with moderate affinity, with high nucleotide exchange rates and a fairly low GTP hydrolysis rate. Plays a role in control of the cell cycle, stress response, ribosome biogenesis and in those bacteria that undergo differentiation, in morphogenesis control. The protein is GTPase Obg of Bacillus licheniformis (strain ATCC 14580 / DSM 13 / JCM 2505 / CCUG 7422 / NBRC 12200 / NCIMB 9375 / NCTC 10341 / NRRL NRS-1264 / Gibson 46).